Reading from the N-terminus, the 261-residue chain is Triosephosphate isomerase (261 aa).

Position 10-12 (10-12 (NWK)) interacts with substrate. His-100 functions as the Electrophile in the catalytic mechanism. Glu-172 serves as the catalytic Proton acceptor. Substrate-binding positions include Gly-178, Ser-218, and 239–240 (GG).

The protein belongs to the triosephosphate isomerase family. As to quaternary structure, homodimer.

It localises to the cytoplasm. It carries out the reaction D-glyceraldehyde 3-phosphate = dihydroxyacetone phosphate. It participates in carbohydrate biosynthesis; gluconeogenesis. The protein operates within carbohydrate degradation; glycolysis; D-glyceraldehyde 3-phosphate from glycerone phosphate: step 1/1. In terms of biological role, involved in the gluconeogenesis. Catalyzes stereospecifically the conversion of dihydroxyacetone phosphate (DHAP) to D-glyceraldehyde-3-phosphate (G3P). This is Triosephosphate isomerase from Mycobacterium bovis (strain BCG / Pasteur 1173P2).